The following is a 348-amino-acid chain: Nicotinate-nucleotide--dimethylbenzimidazole phosphoribosyltransferase (348 aa).

The active-site Proton acceptor is E317.

Belongs to the CobT family.

The enzyme catalyses 5,6-dimethylbenzimidazole + nicotinate beta-D-ribonucleotide = alpha-ribazole 5'-phosphate + nicotinate + H(+). The protein operates within nucleoside biosynthesis; alpha-ribazole biosynthesis; alpha-ribazole from 5,6-dimethylbenzimidazole: step 1/2. Its function is as follows. Catalyzes the synthesis of alpha-ribazole-5'-phosphate from nicotinate mononucleotide (NAMN) and 5,6-dimethylbenzimidazole (DMB). The sequence is that of Nicotinate-nucleotide--dimethylbenzimidazole phosphoribosyltransferase from Clostridioides difficile (strain 630) (Peptoclostridium difficile).